Consider the following 346-residue polypeptide: N-acetyl-gamma-glutamyl-phosphate reductase (346 aa).

The active site involves Cys-149.

The protein belongs to the NAGSA dehydrogenase family. Type 1 subfamily.

The protein localises to the cytoplasm. The catalysed reaction is N-acetyl-L-glutamate 5-semialdehyde + phosphate + NADP(+) = N-acetyl-L-glutamyl 5-phosphate + NADPH + H(+). The protein operates within amino-acid biosynthesis; L-arginine biosynthesis; N(2)-acetyl-L-ornithine from L-glutamate: step 3/4. Functionally, catalyzes the NADPH-dependent reduction of N-acetyl-5-glutamyl phosphate to yield N-acetyl-L-glutamate 5-semialdehyde. This is N-acetyl-gamma-glutamyl-phosphate reductase from Geobacter metallireducens (strain ATCC 53774 / DSM 7210 / GS-15).